Reading from the N-terminus, the 68-residue chain is UPF0253 protein VFMJ11_0680 (68 aa).

Belongs to the UPF0253 family.

This chain is UPF0253 protein VFMJ11_0680, found in Aliivibrio fischeri (strain MJ11) (Vibrio fischeri).